We begin with the raw amino-acid sequence, 652 residues long: Interferon-induced GTP-binding protein Mx1 (652 aa).

The disordered stretch occupies residues 1–27; that stretch reads MKERTSACRHGTPQKHPDTSEESQAME. Residues 58-331 enclose the Dynamin-type G domain; the sequence is DLALPAIAVI…LTSHICKSLP (274 aa). The interval 68–75 is G1 motif; that stretch reads GDQSSGKS. 68–75 contributes to the GTP binding site; the sequence is GDQSSGKS. The segment at 93–95 is G2 motif; the sequence is VTR. The interval 169 to 172 is G3 motif; it reads DLPG. Residues 169–173 and 238–241 contribute to the GTP site; these read DLPGI and TKPD. The tract at residues 238–241 is G4 motif; it reads TKPD. The segment at 270-273 is G5 motif; sequence KCRG. The segment at 332–357 is bundle signaling element (BSE); sequence ILENQINVNHQIASEELQKYGADIPE. The middle domain stretch occupies residues 357–526; the sequence is EDDSKRLSFL…HFQMEHIVYC (170 aa). The tract at residues 358–622 is stalk; sequence DDSKRLSFLM…TSKCNWFLTE (265 aa). The 89-residue stretch at 564-652 folds into the GED domain; that stretch reads TTEMTQHLNA…AQRKLAKFSN (89 aa).

The protein belongs to the TRAFAC class dynamin-like GTPase superfamily. Dynamin/Fzo/YdjA family. As to quaternary structure, homooligomer. Oligomerizes into multimeric filamentous or ring-like structures by virtue of its stalk domain. Oligomerization is critical for GTPase activity, protein stability, and recognition of viral target structures. Interacts with TRPC1, TRPC3, TRPC4, TRPC5, TRPC6 and TRPC7. Interacts with HSPA5. Interacts with TUBB/TUBB5. Interacts with DDX39A and DDX39B. Post-translationally, ISGylated.

The protein localises to the nucleus. It localises to the cytoplasm. The protein resides in the endoplasmic reticulum membrane. It is found in the perinuclear region. In terms of biological role, interferon-induced dynamin-like GTPase which has antiviral activity against influenza A virus, (IAV) and Thogoto virus (THOV). Inhibits IAV by interfering with the process of primary transcription, probably by affecting the viral polymerase function. The polypeptide is Interferon-induced GTP-binding protein Mx1 (Mx1) (Rattus norvegicus (Rat)).